A 348-amino-acid polypeptide reads, in one-letter code: Probable malate dehydrogenase 2, mitochondrial (348 aa).

The transit peptide at 1-9 (MNKILTRSF) directs the protein to the mitochondrion. 31-37 (GASGQIG) is an NAD(+) binding site. Residues R112 and R118 each contribute to the substrate site. NAD(+) contacts are provided by residues N125, Q132, and 150-152 (VGN). Residues N152 and R183 each coordinate substrate. The active-site Proton acceptor is the H208.

Belongs to the LDH/MDH superfamily. MDH type 2 family. In terms of assembly, homodimer.

It localises to the mitochondrion. The enzyme catalyses (S)-malate + NAD(+) = oxaloacetate + NADH + H(+). Its function is as follows. Catalyzes the reversible oxidation of malate to oxaloacetate. This Dictyostelium discoideum (Social amoeba) protein is Probable malate dehydrogenase 2, mitochondrial (mdhB).